We begin with the raw amino-acid sequence, 129 residues long: C-phycocyanin beta subunit (129 aa).

An N4-methylasparagine modification is found at Asn-62. (2R,3E)-phycocyanobilin is bound at residue Cys-116.

Belongs to the phycobiliprotein family. Heterodimer of an alpha and a beta subunit, which further assembles into trimers and the trimers into hexamers. Post-translationally, two isomers exist. Contains two covalently linked bilin chromophores.

Its subcellular location is the cellular thylakoid membrane. In terms of biological role, light-harvesting photosynthetic bile pigment-protein from the phycobiliprotein complex (phycobilisome, PBS). Phycocyanin is the major phycobiliprotein in the PBS rod. This is C-phycocyanin beta subunit from Aphanizomenon flos-aquae.